A 320-amino-acid chain; its full sequence is 33 kDa chaperonin (320 aa).

The segment covering 1-17 (MTDASGSERLKRTKDIS) has biased composition (basic and acidic residues). A disordered region spans residues 1-27 (MTDASGSERLKRTKDISESTPPSSLPD). Intrachain disulfides connect C262/C264 and C295/C298.

It belongs to the HSP33 family. Under oxidizing conditions two disulfide bonds are formed involving the reactive cysteines. Under reducing conditions zinc is bound to the reactive cysteines and the protein is inactive.

It is found in the cytoplasm. Redox regulated molecular chaperone. Protects both thermally unfolding and oxidatively damaged proteins from irreversible aggregation. Plays an important role in the bacterial defense system toward oxidative stress. In Synechococcus sp. (strain JA-3-3Ab) (Cyanobacteria bacterium Yellowstone A-Prime), this protein is 33 kDa chaperonin.